Consider the following 224-residue polypeptide: Adenylate kinase (224 aa).

Gly-10–Thr-15 contacts ATP. Positions Ser-30–Ile-59 are NMP. Residues Ser-31, Arg-36, Asp-57–Ile-59, Gly-83–Arg-86, and Gln-90 each bind AMP. The LID stretch occupies residues Gly-124–Asp-161. Position 125 (Arg-125) interacts with ATP. Zn(2+) is bound by residues Cys-128 and Cys-131. ATP is bound at residue Val-134–Tyr-135. Residues Cys-148 and Cys-151 each contribute to the Zn(2+) site. AMP contacts are provided by Arg-158 and Arg-169. Gly-197 contributes to the ATP binding site.

It belongs to the adenylate kinase family. Monomer.

Its subcellular location is the cytoplasm. It carries out the reaction AMP + ATP = 2 ADP. It participates in purine metabolism; AMP biosynthesis via salvage pathway; AMP from ADP: step 1/1. Catalyzes the reversible transfer of the terminal phosphate group between ATP and AMP. Plays an important role in cellular energy homeostasis and in adenine nucleotide metabolism. The sequence is that of Adenylate kinase from Thermococcus gammatolerans (strain DSM 15229 / JCM 11827 / EJ3).